We begin with the raw amino-acid sequence, 445 residues long: Ribosomal protein uS12 methylthiotransferase RimO (445 aa).

Positions 4-119 (LKFGLVSLGC…LDDAIEDFFN (116 aa)) constitute an MTTase N-terminal domain. Residues Cys-13, Cys-48, Cys-82, Cys-156, Cys-160, and Cys-163 each coordinate [4Fe-4S] cluster. One can recognise a Radical SAM core domain in the interval 142–372 (TTGEYSSYVR…MLIQQQVSKN (231 aa)). The TRAM domain occupies 375–441 (AKKIGKVYKV…EYDLIGVVYN (67 aa)).

This sequence belongs to the methylthiotransferase family. RimO subfamily. [4Fe-4S] cluster serves as cofactor.

It is found in the cytoplasm. It carries out the reaction L-aspartate(89)-[ribosomal protein uS12]-hydrogen + (sulfur carrier)-SH + AH2 + 2 S-adenosyl-L-methionine = 3-methylsulfanyl-L-aspartate(89)-[ribosomal protein uS12]-hydrogen + (sulfur carrier)-H + 5'-deoxyadenosine + L-methionine + A + S-adenosyl-L-homocysteine + 2 H(+). In terms of biological role, catalyzes the methylthiolation of an aspartic acid residue of ribosomal protein uS12. The protein is Ribosomal protein uS12 methylthiotransferase RimO of Clostridium acetobutylicum (strain ATCC 824 / DSM 792 / JCM 1419 / IAM 19013 / LMG 5710 / NBRC 13948 / NRRL B-527 / VKM B-1787 / 2291 / W).